The primary structure comprises 466 residues: Ribulose bisphosphate carboxylase large chain (466 aa).

Lysine 5 carries the N6,N6,N6-trimethyllysine modification. Substrate contacts are provided by asparagine 114 and threonine 164. Residue lysine 166 is the Proton acceptor of the active site. Lysine 168 serves as a coordination point for substrate. Residues lysine 192, aspartate 194, and glutamate 195 each coordinate Mg(2+). N6-carboxylysine is present on lysine 192. Histidine 285 acts as the Proton acceptor in catalysis. Residues arginine 286, histidine 318, and serine 370 each contribute to the substrate site.

It belongs to the RuBisCO large chain family. Type I subfamily. In terms of assembly, heterohexadecamer of 8 large chains and 8 small chains; disulfide-linked. The disulfide link is formed within the large subunit homodimers. It depends on Mg(2+) as a cofactor. In terms of processing, the disulfide bond which can form in the large chain dimeric partners within the hexadecamer appears to be associated with oxidative stress and protein turnover.

It is found in the plastid. Its subcellular location is the chloroplast. It carries out the reaction 2 (2R)-3-phosphoglycerate + 2 H(+) = D-ribulose 1,5-bisphosphate + CO2 + H2O. The enzyme catalyses D-ribulose 1,5-bisphosphate + O2 = 2-phosphoglycolate + (2R)-3-phosphoglycerate + 2 H(+). Functionally, ruBisCO catalyzes two reactions: the carboxylation of D-ribulose 1,5-bisphosphate, the primary event in carbon dioxide fixation, as well as the oxidative fragmentation of the pentose substrate in the photorespiration process. Both reactions occur simultaneously and in competition at the same active site. The protein is Ribulose bisphosphate carboxylase large chain of Coriaria myrtifolia (Tanner's sumac).